The chain runs to 168 residues: Ribosome maturation factor RimP (168 aa).

This sequence belongs to the RimP family.

The protein resides in the cytoplasm. Required for maturation of 30S ribosomal subunits. The chain is Ribosome maturation factor RimP from Rickettsia bellii (strain OSU 85-389).